Consider the following 70-residue polypeptide: MKPGIHPTYAEITATCTCGNIIKVNSTAGKSLHLDVCGACHPFYTGTQKVVDTGGRIDKFNKRFGILGKK.

4 residues coordinate Zn(2+): cysteine 16, cysteine 18, cysteine 37, and cysteine 40.

Belongs to the bacterial ribosomal protein bL31 family. Type A subfamily. Part of the 50S ribosomal subunit. Zn(2+) is required as a cofactor.

Its function is as follows. Binds the 23S rRNA. This Shewanella denitrificans (strain OS217 / ATCC BAA-1090 / DSM 15013) protein is Large ribosomal subunit protein bL31.